Here is a 667-residue protein sequence, read N- to C-terminus: Cyclin-dependent kinase 17 (667 aa).

Disordered regions lie at residues 1–70 and 85–184; these read MTAY…SSLN and DSEY…LRKM. Acidic residues-rich tracts occupy residues 99–111 and 119–144; these read EDFD…EFED and DEDD…ITPE. Residues 151–164 show a composition bias toward polar residues; that stretch reads TGVTTQTTPPSNNT. The Protein kinase domain occupies 328-609; it reads YEKLDKLGEG…AAEAVKHPFL (282 aa). ATP contacts are provided by residues 334 to 342 and K357; that span reads LGEGTYATV. D449 acts as the Proton acceptor in catalysis. Mg(2+)-binding residues include N454 and D467. Residues 642–667 are disordered; that stretch reads HHHSSRRHHRGTLVKDKYRMHSSHHT. A compositionally biased stretch (basic residues) spans 644-653; it reads HSSRRHHRGT.

The protein belongs to the protein kinase superfamily. CMGC Ser/Thr protein kinase family. CDC2/CDKX subfamily. In terms of assembly, interacts with cyy-1; the interaction is required to activate pct-1. Mg(2+) is required as a cofactor.

Its subcellular location is the cytoplasm. The protein resides in the cell projection. It is found in the dendrite. The protein localises to the axon. The catalysed reaction is L-seryl-[protein] + ATP = O-phospho-L-seryl-[protein] + ADP + H(+). The enzyme catalyses L-threonyl-[protein] + ATP = O-phospho-L-threonyl-[protein] + ADP + H(+). Serine/threonine-protein kinase, which, in association with cyy-1, regulates the trafficking of synaptic vesicles in the DA9 motor neuron and probably also in the DD motor neurons and in RIA interneurons. Its function is as follows. Sufficient for synaptic vesicle trafficking in the DA9 motor neuron. The polypeptide is Cyclin-dependent kinase 17 (Caenorhabditis elegans).